The primary structure comprises 254 residues: uncharacterized protein (254 aa).

The Acyl-thioester intermediate role is filled by C71. Active-site residues include H110 and D125.

Belongs to the arylamine N-acetyltransferase family.

This is an uncharacterized protein from Bacillus subtilis (strain 168).